We begin with the raw amino-acid sequence, 190 residues long: Protein GrpE (190 aa).

Residues M1 to S18 show a composition bias toward polar residues. The disordered stretch occupies residues M1–N21.

The protein belongs to the GrpE family. Homodimer.

Its subcellular location is the cytoplasm. In terms of biological role, participates actively in the response to hyperosmotic and heat shock by preventing the aggregation of stress-denatured proteins, in association with DnaK and GrpE. It is the nucleotide exchange factor for DnaK and may function as a thermosensor. Unfolded proteins bind initially to DnaJ; upon interaction with the DnaJ-bound protein, DnaK hydrolyzes its bound ATP, resulting in the formation of a stable complex. GrpE releases ADP from DnaK; ATP binding to DnaK triggers the release of the substrate protein, thus completing the reaction cycle. Several rounds of ATP-dependent interactions between DnaJ, DnaK and GrpE are required for fully efficient folding. The sequence is that of Protein GrpE from Chlamydia trachomatis serovar L2b (strain UCH-1/proctitis).